We begin with the raw amino-acid sequence, 257 residues long: Expansin-A10 (257 aa).

Positions 1 to 18 (MAPCLLLVLFLLPALATG) are cleaved as a signal peptide. The region spanning 50–163 (GGACGFGDLG…RRVNCLRDGG (114 aa)) is the Expansin-like EG45 domain. Residues 173–252 (FFLTVLISNV…EWDFGKTYTG (80 aa)) form the Expansin-like CBD domain.

The protein belongs to the expansin family. Expansin A subfamily. In terms of tissue distribution, expressed in panicles and flowers.

The protein localises to the secreted. Its subcellular location is the cell wall. It is found in the membrane. Its function is as follows. May cause loosening and extension of plant cell walls by disrupting non-covalent bonding between cellulose microfibrils and matrix glucans. No enzymatic activity has been found. May be required for rapid internodal elongation in deepwater rice during submergence. In Oryza sativa subsp. japonica (Rice), this protein is Expansin-A10 (EXPA10).